A 297-amino-acid polypeptide reads, in one-letter code: Acetyl-coenzyme A carboxylase carboxyl transferase subunit beta (297 aa).

A CoA carboxyltransferase N-terminal domain is found at 25–294; it reads LWVKCPETGQ…VPPKGRLPAP (270 aa).

Belongs to the AccD/PCCB family. As to quaternary structure, acetyl-CoA carboxylase is a heterohexamer composed of biotin carboxyl carrier protein (AccB), biotin carboxylase (AccC) and two subunits each of ACCase subunit alpha (AccA) and ACCase subunit beta (AccD).

It localises to the cytoplasm. The catalysed reaction is N(6)-carboxybiotinyl-L-lysyl-[protein] + acetyl-CoA = N(6)-biotinyl-L-lysyl-[protein] + malonyl-CoA. It functions in the pathway lipid metabolism; malonyl-CoA biosynthesis; malonyl-CoA from acetyl-CoA: step 1/1. Component of the acetyl coenzyme A carboxylase (ACC) complex. Biotin carboxylase (BC) catalyzes the carboxylation of biotin on its carrier protein (BCCP) and then the CO(2) group is transferred by the transcarboxylase to acetyl-CoA to form malonyl-CoA. This Azorhizobium caulinodans (strain ATCC 43989 / DSM 5975 / JCM 20966 / LMG 6465 / NBRC 14845 / NCIMB 13405 / ORS 571) protein is Acetyl-coenzyme A carboxylase carboxyl transferase subunit beta.